Consider the following 946-residue polypeptide: Structure-specific endonuclease subunit SLX4 (946 aa).

The segment covering 1–14 (MPASPLPALSPPAS) has biased composition (pro residues). Disordered stretches follow at residues 1 to 35 (MPASPLPALSPPASPRRNTSGASALGSRKADIPPD), 54 to 119 (QHFD…EEAV), 147 to 318 (PSDE…GGFT), 339 to 399 (ADSA…AAQL), 416 to 471 (TKVP…PKHI), 577 to 748 (FPLL…GSGR), and 765 to 799 (ALSPTPPRIHNFENSQPLPLYSVSPTRAKKPKADS). Residues 54 to 74 (QHFDDDIAGKDQEQSRKKSPE) show a composition bias toward basic and acidic residues. 2 stretches are compositionally biased toward basic residues: residues 160-169 (KAGKPRKPRA) and 182-195 (KPKRTRVTKPKAAK). A compositionally biased stretch (basic and acidic residues) spans 278–287 (AVSRRRDWTP). Basic residues predominate over residues 453–469 (SKARSKKASTKAAAKPK). Over residues 627–636 (KANDEPDHVM) the composition is skewed to basic and acidic residues. Residues 707 to 717 (KSQSAIATSGS) show a composition bias toward polar residues. Positions 722–733 (KEPKRTKGKEVK) are enriched in basic and acidic residues.

The protein belongs to the SLX4 family. As to quaternary structure, forms a heterodimer with SLX1. Phosphorylated in response to DNA damage.

Its subcellular location is the nucleus. In terms of biological role, regulatory subunit of the SLX1-SLX4 structure-specific endonuclease that resolves DNA secondary structures generated during DNA repair and recombination. Has endonuclease activity towards branched DNA substrates, introducing single-strand cuts in duplex DNA close to junctions with ss-DNA. This is Structure-specific endonuclease subunit SLX4 from Phaeosphaeria nodorum (strain SN15 / ATCC MYA-4574 / FGSC 10173) (Glume blotch fungus).